Here is a 619-residue protein sequence, read N- to C-terminus: Chaperone protein DnaK (619 aa).

The residue at position 179 (threonine 179) is a Phosphothreonine; by autocatalysis. The disordered stretch occupies residues glutamine 584–lysine 619. Residues alanine 585–aspartate 605 show a composition bias toward low complexity. A compositionally biased stretch (basic and acidic residues) spans glycine 606–lysine 619.

This sequence belongs to the heat shock protein 70 family.

Acts as a chaperone. The polypeptide is Chaperone protein DnaK (Elusimicrobium minutum (strain Pei191)).